An 874-amino-acid polypeptide reads, in one-letter code: Alanine--tRNA ligase (874 aa).

H564, H568, C665, and H669 together coordinate Zn(2+).

It belongs to the class-II aminoacyl-tRNA synthetase family. The cofactor is Zn(2+).

It is found in the cytoplasm. It catalyses the reaction tRNA(Ala) + L-alanine + ATP = L-alanyl-tRNA(Ala) + AMP + diphosphate. Catalyzes the attachment of alanine to tRNA(Ala) in a two-step reaction: alanine is first activated by ATP to form Ala-AMP and then transferred to the acceptor end of tRNA(Ala). Also edits incorrectly charged Ser-tRNA(Ala) and Gly-tRNA(Ala) via its editing domain. This Burkholderia cenocepacia (strain HI2424) protein is Alanine--tRNA ligase.